Consider the following 436-residue polypeptide: Chromosomal replication initiator protein DnaA (436 aa).

The tract at residues 1-69 is domain I, interacts with DnaA modulators; sequence MSIFTKIKKS…SELYEKETGI (69 aa). Positions 69–97 are domain II; the sequence is IKPKIDIVTKEISHRPLTIEEIIEPTTPS. The tract at residues 98–311 is domain III, AAA+ region; sequence VLIPEYTFES…GMITKINAMS (214 aa). Positions 142, 144, 145, and 146 each coordinate ATP. The interval 312-436 is domain IV, binds dsDNA; that stretch reads KILGISEITL…KNKIQIKKSE (125 aa).

It belongs to the DnaA family. As to quaternary structure, oligomerizes as a right-handed, spiral filament on DNA at oriC.

It localises to the cytoplasm. In terms of biological role, plays an essential role in the initiation and regulation of chromosomal replication. ATP-DnaA binds to the origin of replication (oriC) to initiate formation of the DNA replication initiation complex once per cell cycle. Binds the DnaA box (a 9 base pair repeat at the origin) and separates the double-stranded (ds)DNA. Forms a right-handed helical filament on oriC DNA; dsDNA binds to the exterior of the filament while single-stranded (ss)DNA is stabiized in the filament's interior. The ATP-DnaA-oriC complex binds and stabilizes one strand of the AT-rich DNA unwinding element (DUE), permitting loading of DNA polymerase. After initiation quickly degrades to an ADP-DnaA complex that is not apt for DNA replication. Binds acidic phospholipids. In Nautilia profundicola (strain ATCC BAA-1463 / DSM 18972 / AmH), this protein is Chromosomal replication initiator protein DnaA.